Reading from the N-terminus, the 518-residue chain is Calcium and calcium/calmodulin-dependent serine/threonine-protein kinase (518 aa).

The Protein kinase domain maps to 13-300 (YEISEILGRG…AQELLSHPWV (288 aa)). Residues 19–27 (LGRGGFSVV) and K44 each bind ATP. D165 functions as the Proton acceptor in the catalytic mechanism. The residue at position 265 (T265) is a Phosphothreonine. The segment at 323 to 336 (ARRKLRAAAIASVW) is calmodulin-binding. The stretch at 344-365 (TKKLRSLVGTYDLKEEEIESLR) forms a coiled coil. EF-hand domains are found at residues 394–429 (SLIP…LKNS), 430–465 (KGDD…LPEE), and 472–507 (TEPG…DSSL). Ca(2+) contacts are provided by D407, N409, D411, T413, E418, D443, D445, S447, C449, E454, D485, N487, D489, K491, and E496.

This sequence belongs to the protein kinase superfamily. CAMK Ser/Thr protein kinase family. CaMK subfamily. Interacts with IPD3. Interacts with CIP73. In terms of processing, autophosphorylation stimulated by calcium. Occurs probably by an intermolecular mechanism. As to expression, mainly expressed in roots and nodules. Detected in leaves, stems and cotyledons.

The protein resides in the nucleus. It carries out the reaction L-seryl-[protein] + ATP = O-phospho-L-seryl-[protein] + ADP + H(+). The catalysed reaction is L-threonyl-[protein] + ATP = O-phospho-L-threonyl-[protein] + ADP + H(+). Its activity is regulated as follows. Activated by calcium/calmodulin binding after calcium-induced autophosphorylation. Its function is as follows. Calcium- and calmodulin-dependent protein kinase necessary and sufficient for dedifferentiation of root cortical cells into nodule initials. Not required for calcium spiking. Acts as central regulator of the nodule organogenesis program. Required for root hair curling and infection thread (IT) formation upon rhizobial infection, and arbuscule formation during arbuscular mycorrhiza (AM) fungal infection. Phosphorylates the downstream target IPD3, a protein required for root infection by symbiotic rhizobia and AM fungi. Phosphorylates the downstream target CIP73, a protein required for root nodule organogenesis. Mediates the phosphorylation of leghemoglobins (e.g. LB1) to modulate their oxygen O(2) affinity, thus regulating the diffusion of oxygen to the bacteroids in nodules. This is Calcium and calcium/calmodulin-dependent serine/threonine-protein kinase from Lotus japonicus (Lotus corniculatus var. japonicus).